The primary structure comprises 185 residues: Elongation factor P (185 aa).

It belongs to the elongation factor P family.

It localises to the cytoplasm. It participates in protein biosynthesis; polypeptide chain elongation. Its function is as follows. Involved in peptide bond synthesis. Stimulates efficient translation and peptide-bond synthesis on native or reconstituted 70S ribosomes in vitro. Probably functions indirectly by altering the affinity of the ribosome for aminoacyl-tRNA, thus increasing their reactivity as acceptors for peptidyl transferase. The polypeptide is Elongation factor P (Bacillus anthracis (strain CDC 684 / NRRL 3495)).